A 275-amino-acid chain; its full sequence is Gap junction gamma-3 protein (275 aa).

Residues 1–22 lie on the Cytoplasmic side of the membrane; the sequence is MCGSFLRRVAAEESRHPTPVGR. A helical transmembrane segment spans residues 23–43; sequence LLLPALLGLRLVLLAAGGTGV. Residues 44 to 77 are Extracellular-facing; that stretch reads FGGGEEQSEFVCHTQQAGCKAVCYDAFHPLSPLR. Residues 78-98 traverse the membrane as a helical segment; sequence FWAFQVTLVAVPSALYMGFIL. Residues 99–134 are Cytoplasmic-facing; that stretch reads YHVIWHWEASEKVKTEEETLSQGEKGGEASRAGSSR. The helical transmembrane segment at 135–155 threads the bilayer; the sequence is LLWAYVAQLGVRLALEGAALG. At 156–196 the chain is on the extracellular side; sequence GQYHLYGFRMPSSFVCRLEPCLGSTNCYLSRPSEKSIFLKT. Residues 197–217 form a helical membrane-spanning segment; the sequence is MFGVTGLCLLFTLLELVLLGL. Topologically, residues 218–275 are cytoplasmic; that stretch reads GRWWRIWRHKSPSSNYSPTSQSAKRCKAPTDNFPVVEIRERPGEAGERGSEVPLSARP. A compositionally biased stretch (basic and acidic residues) spans 254–267; that stretch reads EIRERPGEAGERGS. The tract at residues 254 to 275 is disordered; sequence EIRERPGEAGERGSEVPLSARP.

The protein belongs to the connexin family. Gamma-type subfamily. In terms of assembly, a connexon is composed of a hexamer of connexins.

The protein resides in the cell membrane. Its subcellular location is the cell junction. It localises to the gap junction. Its function is as follows. One gap junction consists of a cluster of closely packed pairs of transmembrane channels, the connexons, through which materials of low MW diffuse from one cell to a neighboring cell. The polypeptide is Gap junction gamma-3 protein (GJC3) (Bos taurus (Bovine)).